We begin with the raw amino-acid sequence, 152 residues long: Transcriptional regulator MraZ (152 aa).

SpoVT-AbrB domains lie at 5–52 (ASAI…PLQE) and 81–124 (AHEC…DEAA).

The protein belongs to the MraZ family. In terms of assembly, forms oligomers.

It localises to the cytoplasm. Its subcellular location is the nucleoid. In Shewanella denitrificans (strain OS217 / ATCC BAA-1090 / DSM 15013), this protein is Transcriptional regulator MraZ.